A 155-amino-acid polypeptide reads, in one-letter code: MRTSMRISLRLLALLACAICSQASLERENNEGTNMANHKLSGVIQWKYEKRPFCNAFTGCGRKRTYPSYPPFSLFKRNEVEEKPYNNEYLSEGLSDLIDINAEPAVENVQKQIMSQAKIFEAIKEASKEIFRQKNKQKMLQNEKEMQQLEERESK.

A signal peptide spans 1–23; the sequence is MRTSMRISLRLLALLACAICSQA. Residues 24-49 constitute a propeptide that is removed on maturation; sequence SLERENNEGTNMANHKLSGVIQWKYE. Cysteine 54 and cysteine 60 are oxidised to a cystine. At cysteine 60 the chain carries Cysteine amide. The propeptide occupies 64-155; sequence RTYPSYPPFS…MQQLEERESK (92 aa). Residues 135–155 are disordered; it reads NKQKMLQNEKEMQQLEERESK. The segment covering 141–155 has biased composition (basic and acidic residues); it reads QNEKEMQQLEERESK.

As to expression, central nervous system; most neurons exhibit coexpression with Burs.

The protein localises to the secreted. In terms of biological role, cardioregulatory neurohormone that increases heart beat rate during adult wing inflation; has no effect on beat amplitude. The effect of CCAP is both ino- and chronotropic. In Drosophila melanogaster (Fruit fly), this protein is Cardioactive peptide.